A 230-amino-acid polypeptide reads, in one-letter code: Orotidine 5'-phosphate decarboxylase (230 aa).

Substrate contacts are provided by residues aspartate 11, lysine 34, 61–70 (DLKLHDIPNT), threonine 117, arginine 179, glutamine 188, glycine 208, and arginine 209. Catalysis depends on lysine 63, which acts as the Proton donor.

Belongs to the OMP decarboxylase family. Type 1 subfamily. Homodimer.

The enzyme catalyses orotidine 5'-phosphate + H(+) = UMP + CO2. It participates in pyrimidine metabolism; UMP biosynthesis via de novo pathway; UMP from orotate: step 2/2. Catalyzes the decarboxylation of orotidine 5'-monophosphate (OMP) to uridine 5'-monophosphate (UMP). The sequence is that of Orotidine 5'-phosphate decarboxylase from Streptococcus equi subsp. zooepidemicus (strain MGCS10565).